A 348-amino-acid chain; its full sequence is Selenide, water dikinase (348 aa).

Residue Cys17 is part of the active site. Residues Lys20 and 47-49 (THD) contribute to the ATP site. Asp50 is a binding site for Mg(2+). ATP is bound by residues Asp67, Asp90, and 138-140 (GHT). Asp90 lines the Mg(2+) pocket. Asp226 contacts Mg(2+).

Belongs to the selenophosphate synthase 1 family. Class I subfamily. In terms of assembly, homodimer. Requires Mg(2+) as cofactor.

The enzyme catalyses hydrogenselenide + ATP + H2O = selenophosphate + AMP + phosphate + 2 H(+). Synthesizes selenophosphate from selenide and ATP. This is Selenide, water dikinase from Porphyromonas gingivalis (strain ATCC BAA-308 / W83).